The primary structure comprises 222 residues: UPF0758 protein YicR (222 aa).

An MPN domain is found at Pro100–Ile222. The Zn(2+) site is built by His171, His173, and Asp184. Positions His171–Asp184 match the JAMM motif motif.

Belongs to the UPF0758 family. YicR subfamily.

This chain is UPF0758 protein YicR, found in Escherichia coli O45:K1 (strain S88 / ExPEC).